The sequence spans 29 residues: U1-pseudomyrmecitoxin-Pt1 subunit SS1 (29 aa).

This sequence belongs to the myrmexin family. In terms of assembly, heterodimer composed of subunit SS1 and subunit LS1 (U1-PSDTX-Pt1b), and heterodimer composed of subunit SS1 and LS2 (U1-PSDTX-Pt1a); disulfide-linked. As to expression, expressed by the venom gland.

The protein localises to the secreted. Its function is as follows. This heterodimer may have anti-inflammatory properties, since the myrmexin complex (composed of 6 SS-LS heterodimers) inhibits carrageenin-induced edema in a dose-dependent manner (after subcutaneous injection into rats). The protein is U1-pseudomyrmecitoxin-Pt1 subunit SS1 of Pseudomyrmex triplarinus (Ant).